We begin with the raw amino-acid sequence, 457 residues long: Adenylyltransferase and sulfurtransferase MOCS3 (457 aa).

A disordered region spans residues 40–60 (ANGGGNGDGLADEGGERNTGT). Position 63 is a phosphothreonine (threonine 63). ATP contacts are provided by residues glycine 102, aspartate 123, 130–134 (SNFHR), lysine 147, and 191–192 (DN). The Zn(2+) site is built by cysteine 233 and cysteine 236. The active-site Glycyl thioester intermediate; for adenylyltransferase activity is the cysteine 250. Zn(2+) is bound by residues cysteine 309 and cysteine 312. Residues 358–455 (ESQPHLLFDV…WTRKVDPDFP (98 aa)) form the Rhodanese domain. Residue cysteine 414 is the Cysteine persulfide intermediate; for sulfurtransferase activity of the active site.

This sequence in the N-terminal section; belongs to the HesA/MoeB/ThiF family. UBA4 subfamily. It depends on Zn(2+) as a cofactor.

The protein localises to the cytoplasm. Its subcellular location is the cytosol. The enzyme catalyses [molybdopterin-synthase sulfur-carrier protein]-C-terminal Gly-Gly + ATP + H(+) = [molybdopterin-synthase sulfur-carrier protein]-C-terminal Gly-Gly-AMP + diphosphate. The catalysed reaction is [molybdopterin-synthase sulfur-carrier protein]-C-terminal Gly-Gly-AMP + S-sulfanyl-L-cysteinyl-[cysteine desulfurase] + AH2 = [molybdopterin-synthase sulfur-carrier protein]-C-terminal-Gly-aminoethanethioate + L-cysteinyl-[cysteine desulfurase] + A + AMP + 2 H(+). It participates in tRNA modification; 5-methoxycarbonylmethyl-2-thiouridine-tRNA biosynthesis. The protein operates within cofactor biosynthesis; molybdopterin biosynthesis. Plays a central role in 2-thiolation of mcm(5)S(2)U at tRNA wobble positions of cytosolic tRNA(Lys), tRNA(Glu) and tRNA(Gln). Also essential during biosynthesis of the molybdenum cofactor. Acts by mediating the C-terminal thiocarboxylation of sulfur carriers URM1 and MOCS2A. Its N-terminus first activates URM1 and MOCS2A as acyl-adenylates (-COAMP), then the persulfide sulfur on the catalytic cysteine is transferred to URM1 and MOCS2A to form thiocarboxylation (-COSH) of their C-terminus. The reaction probably involves hydrogen sulfide that is generated from the persulfide intermediate and that acts as a nucleophile towards URM1 and MOCS2A. Subsequently, a transient disulfide bond is formed. Does not use thiosulfate as sulfur donor; NFS1 probably acting as a sulfur donor for thiocarboxylation reactions. This Drosophila willistoni (Fruit fly) protein is Adenylyltransferase and sulfurtransferase MOCS3.